The primary structure comprises 283 residues: 2-dehydro-3-deoxyphosphooctonate aldolase (283 aa).

The protein belongs to the KdsA family.

The protein localises to the cytoplasm. It catalyses the reaction D-arabinose 5-phosphate + phosphoenolpyruvate + H2O = 3-deoxy-alpha-D-manno-2-octulosonate-8-phosphate + phosphate. The protein operates within carbohydrate biosynthesis; 3-deoxy-D-manno-octulosonate biosynthesis; 3-deoxy-D-manno-octulosonate from D-ribulose 5-phosphate: step 2/3. It functions in the pathway bacterial outer membrane biogenesis; lipopolysaccharide biosynthesis. This is 2-dehydro-3-deoxyphosphooctonate aldolase from Methylococcus capsulatus (strain ATCC 33009 / NCIMB 11132 / Bath).